The sequence spans 302 residues: Urease accessory protein UreD (302 aa).

This sequence belongs to the UreD family. In terms of assembly, ureD, UreF and UreG form a complex that acts as a GTP-hydrolysis-dependent molecular chaperone, activating the urease apoprotein by helping to assemble the nickel containing metallocenter of UreC. The UreE protein probably delivers the nickel.

It is found in the cytoplasm. In terms of biological role, required for maturation of urease via the functional incorporation of the urease nickel metallocenter. The protein is Urease accessory protein UreD of Pseudoalteromonas translucida (strain TAC 125).